The following is a 575-amino-acid chain: Electron transfer flavoprotein-ubiquinone oxidoreductase, mitochondrial (575 aa).

A mitochondrion-targeting transit peptide spans 1 to 33 (MQRVLRAAAAGIGHASGHRAPRWGAAAAAARWL). 44-58 (VVVVGAGPAGLAAAI) contacts FAD. An intramembrane segment occupies 82–103 (VGAHVLSGNVFEPRALDELIPK). A ubiquinone contacts are provided by G276 and G277. The stretch at 343–363 (IPNPVFPGGAIIGCSAGFLNV) is an intramembrane region. C520, C544, C547, and C550 together coordinate [4Fe-4S] cluster. The 4Fe-4S ferredoxin-type domain occupies 535-564 (QKLHINAQNCLHCKACDIKDPKQNIEWTVP).

This sequence belongs to the ETF-QO/FixC family. It depends on [4Fe-4S] cluster as a cofactor. FAD serves as cofactor.

The protein resides in the mitochondrion inner membrane. The catalysed reaction is a ubiquinone + reduced [electron-transfer flavoprotein] = a ubiquinol + oxidized [electron-transfer flavoprotein] + H(+). Functionally, accepts electrons from ETF and reduces ubiquinone. The protein is Electron transfer flavoprotein-ubiquinone oxidoreductase, mitochondrial of Oryza sativa subsp. japonica (Rice).